The primary structure comprises 113 residues: MWGSLCKAPLLRLRPTFAAVSNVKTIHIKASPDYNEGIDKSKPLKFSTSKASHRHWTVAKSLGSNQQRPWWKVVPLSVFLTTVLLWAIFRKETDIDEAIYKPIEQLQDESENK.

A signal peptide spans M1–A18. Residues A19–K72 are Mitochondrial matrix-facing. The chain crosses the membrane as a helical span at residues V73–F89. At R90–K113 the chain is on the mitochondrial intermembrane side.

It belongs to the UQCC4 family.

Its subcellular location is the mitochondrion inner membrane. Its function is as follows. Required for the assembly and stability of the mitochondrial ubiquinol-cytochrome c reductase complex (complex III (CIII) or cytochrome b-c1 complex), a multisubunit transmembrane complex that is part of the mitochondrial electron transport chain (ETC) which drives oxidative phosphorylation. The chain is Ubiquinol-cytochrome-c reductase complex assembly factor 4 (uqcc4) from Xenopus tropicalis (Western clawed frog).